Consider the following 144-residue polypeptide: Superoxide dismutase [Mn], mitochondrial (144 aa).

Mn(2+)-binding residues include H10, H58, and D143.

It belongs to the iron/manganese superoxide dismutase family. As to quaternary structure, homotetramer. Mn(2+) is required as a cofactor.

Its subcellular location is the mitochondrion matrix. The catalysed reaction is 2 superoxide + 2 H(+) = H2O2 + O2. Its function is as follows. Destroys superoxide anion radicals which are normally produced within the cells and which are toxic to biological systems. The protein is Superoxide dismutase [Mn], mitochondrial of Eptatretus stoutii (Pacific hagfish).